A 57-amino-acid chain; its full sequence is Large ribosomal subunit protein bL32B (57 aa).

The protein belongs to the bacterial ribosomal protein bL32 family.

This is Large ribosomal subunit protein bL32B (rpmF2) from Listeria innocua serovar 6a (strain ATCC BAA-680 / CLIP 11262).